Here is a 288-residue protein sequence, read N- to C-terminus: Nucleotide-binding protein Tola_2941 (288 aa).

An ATP-binding site is contributed by 8 to 15 (GRSGSGKT). 56–59 (DVRN) serves as a coordination point for GTP.

The protein belongs to the RapZ-like family.

Functionally, displays ATPase and GTPase activities. The protein is Nucleotide-binding protein Tola_2941 of Tolumonas auensis (strain DSM 9187 / NBRC 110442 / TA 4).